The primary structure comprises 638 residues: Guanylate-binding protein 7 (638 aa).

The GTPase domain (Globular) stretch occupies residues 1–310 (MASGPNMEAP…DAINSGDVPC (310 aa)). A GB1/RHD3-type G domain is found at 35-277 (TQPVVVVAIV…FCSYIFSNSK (243 aa)). GTP-binding positions include 45 to 52 (GLYRTGKS), 67 to 69 (LGT), and 97 to 101 (DTEGL). The segment at 311–638 (LENAVTTLAQ…TQNSDKVRKL (328 aa)) is interaction with the CYBA-CYBB complex. The interval 590-638 (SSLGAKILDGFGDVLISVVPGSGKYFGLGLKILSSQMNQTQNSDKVRKL) is C-terminal tail; required for its localization to cytoplasmic vesicle.

This sequence belongs to the TRAFAC class dynamin-like GTPase superfamily. GB1/RHD3 GTPase family. GB1 subfamily. As to quaternary structure, monomer and dimer. Interacts with CYBA, CYBA-CYBB complex and ATG4B. Interacts (via GB1/RHD3-type G domain) with NCF2 and NCF2-NCF4 complex.

Its subcellular location is the cytoplasmic vesicle membrane. The enzyme catalyses GTP + H2O = GDP + phosphate + H(+). The catalysed reaction is GDP + H2O = GMP + phosphate + H(+). With respect to regulation, inhibited by orthovanadate, berylium fluoride and aluminum flouride. Functionally, interferon (IFN)-inducible GTPase that plays important roles in innate immunity against a diverse range of bacterial, viral and protozoan pathogens. Hydrolyzes GTP to GMP in two consecutive cleavage reactions and predominantly uses GTP and not GDP or GMP as the substrate. Following infection, recruited to the pathogen-containing vacuoles or vacuole-escaped bacteria and acts as a positive regulator of inflammasome assembly by promoting the release of inflammasome ligands from bacteria. Acts by promoting lysis of pathogen-containing vacuoles, releasing pathogens into the cytosol. Following pathogen release in the cytosol, promotes recruitment of proteins that mediate bacterial cytolysis, such as Gm12250/Irgb10: this liberates ligands that are detected by inflammasomes, such as lipopolysaccharide (LPS) that activates the non-canonical CASP4/CASP11 inflammasome or double-stranded DNA (dsDNA) that activates the AIM2 inflammasome. Also promotes IFN-gamma-mediated host defense against bacterial infections by regulating oxidative responses and bacteriolytic peptide generation. May help to assemble NADPH oxidase on phagosomal membranes by acting as a bridging protein between NADPH oxidase cytosolic subunits NCF2-NCF4 and the membrane subunits CYBA-CYBB. Participates along with GBP1 in trafficking monoubiquinated protein cargo to autolysosomes for generating ubiquitin-derived antimicrobial peptides. Facilitates influenza A virus replication by inhibiting the activation of NF-kappaB and JAK-STAT signaling pathways and the expression of type I, type III interferons and pro-inflammatory cytokines. Confers protection to several pathogens, including the bacterial pathogens Listeria monocytogenes and Mycobacterium bovis BCG as well as the protozoan pathogen Toxoplasma gondii. Required for disruption of the parasitophorous vacuole formed following T.gondii infection and subsequent killing of the parasite. This chain is Guanylate-binding protein 7 (Gbp7), found in Mus musculus (Mouse).